The primary structure comprises 201 residues: Large ribosomal subunit protein uL4 (201 aa).

Residues 39 to 72 (RRGTASTKTRAQVSKSGKKMYSQKGTGNARHGDR) form a disordered region. Polar residues predominate over residues 42-53 (TASTKTRAQVSK).

This sequence belongs to the universal ribosomal protein uL4 family. As to quaternary structure, part of the 50S ribosomal subunit.

One of the primary rRNA binding proteins, this protein initially binds near the 5'-end of the 23S rRNA. It is important during the early stages of 50S assembly. It makes multiple contacts with different domains of the 23S rRNA in the assembled 50S subunit and ribosome. Functionally, forms part of the polypeptide exit tunnel. The polypeptide is Large ribosomal subunit protein uL4 (Deinococcus deserti (strain DSM 17065 / CIP 109153 / LMG 22923 / VCD115)).